Consider the following 932-residue polypeptide: MLKALFGDPNTRKLKKFQPYVAEVNLYEEDIEKLSDDELKYKTVEFREALDKARSDAETEEILDEILPEAFAVVREAGKRVLGMRHFDVQLLGGIILHKGQIAEMKTGEGKTLVATLPSYLNGLTGKGVHVVTVNDYLARRDAEWMGQIHRFLGLTVGLVQSGMNPEERKKNYACDITYTTNSELGFDYLRDNMSTAMIEVVQRPFNFCIIDEVDSILIDEARTPLIISGQVERPTEKYLQASDIAAQLEPEIHYEVDEKQRNVLMTDEGFEKAEQLLQTTDLFDKNDPWAHYIFNAIKAKELFLKDVNYIVRNGEVVIVDEFTGRIMVGRRWSDGLHQAIEAKERVEIQKESQTLATITYQNFFLLYPKLSGMTGTAKTEETELEKVYNLQVTITPTNRPSSRQDWPDVVYKNEEAKWKAVALECEELHQQGRPILVGTTSVEKSEVISRLLQSSGIHHNLLNARPENVERESEIVAQAGRKGAVTIATNMAGRGTDIILGGNSDYMARLKVREYLMPKIVRPEDDELGAGVTGWVSGREKPQGFGNQNGKKKVKTWQVSPDIYPTTISQETEDLLKKAVKFAVDQYGLQSLTELEAEDKLAIASEKGPTDDPVILKLREVYNQIRREYEVLTSAEHKEVVELGGLHVIGTERHESRRVDNQLRGRAGRQGDPGSTRFFLSLEDNLLRIFGGDRVAGLMNMFRVEEDMPIESKMLTGSLEGAQKKVETYYYDIRKQVFEYDEVMNNQRKAIYAERRRVLEGLDLKEQVLVYAEKTMDEIVDAYVNPELPPEEWDVENMLDKAKQFVYLLEDLTVEDLGDMTVWEMKTFFHEEVRKAYDLKETQVDKVRPGLMREAERYFILQQIDNLWREHLQSMEALRESIGLRGYGQKDPLIEYKQEGYEMFLEMMIDIRRNVVYSLFQFQPQQQPQAV.

ATP contacts are provided by residues glutamine 90, glycine 108–threonine 112, and aspartate 498.

Belongs to the SecA family. As to quaternary structure, monomer and homodimer. Part of the essential Sec protein translocation apparatus which comprises SecA, SecYEG and auxiliary proteins SecDF. Other proteins may also be involved.

The protein resides in the cell inner membrane. It localises to the cellular thylakoid membrane. Its subcellular location is the cytoplasm. It carries out the reaction ATP + H2O + cellular proteinSide 1 = ADP + phosphate + cellular proteinSide 2.. Its function is as follows. Part of the Sec protein translocase complex. Interacts with the SecYEG preprotein conducting channel. Has a central role in coupling the hydrolysis of ATP to the transfer of proteins into and across the cell membrane, serving as an ATP-driven molecular motor driving the stepwise translocation of polypeptide chains across the membrane. In terms of biological role, probably participates in protein translocation into and across both the cytoplasmic and thylakoid membranes in cyanobacterial cells. The polypeptide is Protein translocase subunit SecA (Synechocystis sp. (strain ATCC 27184 / PCC 6803 / Kazusa)).